A 354-amino-acid chain; its full sequence is NADH-quinone oxidoreductase subunit H (354 aa).

A run of 8 helical transmembrane segments spans residues isoleucine 22–leucine 42, tyrosine 91–phenylalanine 111, leucine 124–alanine 144, methionine 168–valine 188, valine 203–valine 223, leucine 255–phenylalanine 275, isoleucine 291–isoleucine 311, and leucine 326–isoleucine 346.

It belongs to the complex I subunit 1 family. In terms of assembly, NDH-1 is composed of 14 different subunits. Subunits NuoA, H, J, K, L, M, N constitute the membrane sector of the complex.

The protein localises to the cell inner membrane. It carries out the reaction a quinone + NADH + 5 H(+)(in) = a quinol + NAD(+) + 4 H(+)(out). Its function is as follows. NDH-1 shuttles electrons from NADH, via FMN and iron-sulfur (Fe-S) centers, to quinones in the respiratory chain. The immediate electron acceptor for the enzyme in this species is believed to be ubiquinone. Couples the redox reaction to proton translocation (for every two electrons transferred, four hydrogen ions are translocated across the cytoplasmic membrane), and thus conserves the redox energy in a proton gradient. This subunit may bind ubiquinone. In Cupriavidus pinatubonensis (strain JMP 134 / LMG 1197) (Cupriavidus necator (strain JMP 134)), this protein is NADH-quinone oxidoreductase subunit H.